Reading from the N-terminus, the 96-residue chain is Pore-forming peptide amoebapore B (96 aa).

The signal sequence occupies residues 1–19 (MRAIIFVLIFAIAFAATRE). A Saposin B-type domain is found at 20 to 96 (GAILCNLCKD…VVVCEKIHAC (77 aa)). Disulfide bonds link C24/C96, C27/C90, and C54/C65.

As to quaternary structure, monomer. Homodimer. Hexamer; formed during insertion in the membrane.

It is found in the cytoplasmic granule. Functionally, forms pores in the cell membrane of host cells. Has antibacterial activity against M.luteus, no activity against E.coli. Implicated in the cytolytic activity of the parasite. This Entamoeba histolytica (strain ATCC 30459 / HM-1:IMSS / ABRM) protein is Pore-forming peptide amoebapore B.